A 222-amino-acid chain; its full sequence is Peptidyl-prolyl cis-trans isomerase FKBP7 (222 aa).

The first 23 residues, 1-23 (MPKTMHFLFRFIVFFYLWGLFTA), serve as a signal peptide directing secretion. N45 is a glycosylation site (N-linked (GlcNAc...) asparagine). The PPIase FKBP-type domain occupies 53-145 (GDLLNAHYDG…IFEIELYAVT (93 aa)). 2 consecutive EF-hand domains span residues 145–180 (TKGPRSTETFKQIDMDSDRQLSKAEINLYLQREFEK) and 189–222 (YQDAVLEDIFKKNDHDGDGFISPKEYNVYQHDEL). Residues D158, D160, D162, Q164, E169, D202, D204, D206, and E213 each coordinate Ca(2+). Positions 219-222 (HDEL) match the Prevents secretion from ER motif.

In terms of processing, glycosylated.

Its subcellular location is the endoplasmic reticulum lumen. The enzyme catalyses [protein]-peptidylproline (omega=180) = [protein]-peptidylproline (omega=0). PPIases accelerate the folding of proteins during protein synthesis. This chain is Peptidyl-prolyl cis-trans isomerase FKBP7 (FKBP7), found in Pongo abelii (Sumatran orangutan).